The primary structure comprises 65 residues: MKKVEIKKKTIKELNIELMNLLREQFNLTLQHSAKKLQQSHLLQHVRRNIAQVNTILAEKEKECD.

Belongs to the universal ribosomal protein uL29 family.

The protein is Large ribosomal subunit protein uL29 of Buchnera aphidicola subsp. Baizongia pistaciae (strain Bp).